We begin with the raw amino-acid sequence, 84 residues long: MYB-like transcription factor TCL1 (84 aa).

Residues 36–73 (TEQEEDLIFRMYRLVGDRWDLIARRVVGREAKEIERYW) form the Myb-like domain.

Expressed in inflorescences and trichomes of rosette and cauline leaves.

Its subcellular location is the nucleus. In terms of biological role, MYB-type transcription factor involved in trichome cell specification. Acts as a negative regulator of trichome patterning and formation by direct binding to the cis-acting regulatory elements of GL1, thus suppressing the expression of GL1. The chain is MYB-like transcription factor TCL1 (TCL1) from Arabidopsis thaliana (Mouse-ear cress).